We begin with the raw amino-acid sequence, 409 residues long: Divalent metal cation transporter MntH (409 aa).

Transmembrane regions (helical) follow at residues Leu-19–Ala-39, Ala-46–Ile-66, Trp-98–Ile-118, Leu-122–Ile-142, Leu-155–Ser-175, Ala-196–His-216, Ile-241–Phe-261, Ile-290–Gly-310, Phe-320–Leu-340, Ile-348–Leu-368, and Ile-388–Leu-408.

The protein belongs to the NRAMP family.

Its subcellular location is the cell inner membrane. Its function is as follows. H(+)-stimulated, divalent metal cation uptake system. This chain is Divalent metal cation transporter MntH, found in Yersinia enterocolitica serotype O:8 / biotype 1B (strain NCTC 13174 / 8081).